The following is a 525-amino-acid chain: Probable feruloyl esterase B-1 (525 aa).

The signal sequence occupies residues 1-20 (MMRWFLLIGLASAAATDSSA). 6 disulfide bridges follow: Cys-26-Cys-75, Cys-61-Cys-114, Cys-187-Cys-442, Cys-256-Cys-273, Cys-282-Cys-292, and Cys-502-Cys-524. Asn-51, Asn-80, and Asn-98 each carry an N-linked (GlcNAc...) asparagine glycan. Ser-188 acts as the Acyl-ester intermediate in catalysis. Ca(2+) is bound by residues Asp-257, Asp-260, Ala-262, and Asp-264. N-linked (GlcNAc...) asparagine glycosylation is found at Asn-283, Asn-288, and Asn-351. Catalysis depends on charge relay system residues Asp-401 and His-441.

The protein belongs to the tannase family.

It is found in the secreted. The catalysed reaction is feruloyl-polysaccharide + H2O = ferulate + polysaccharide.. Involved in degradation of plant cell walls. Hydrolyzes the feruloyl-arabinose ester bond in arabinoxylans as well as the feruloyl-galactose and feruloyl-arabinose ester bonds in pectin. The polypeptide is Probable feruloyl esterase B-1 (faeB-1) (Neosartorya fischeri (strain ATCC 1020 / DSM 3700 / CBS 544.65 / FGSC A1164 / JCM 1740 / NRRL 181 / WB 181) (Aspergillus fischerianus)).